We begin with the raw amino-acid sequence, 365 residues long: Patr class I histocompatibility antigen, A-108 alpha chain (365 aa).

The signal sequence occupies residues 1–24; it reads MAVMPPRTLLLLLSGALALTQTWA. Residues 25 to 114 form an alpha-1 region; the sequence is GSHSMRYFYT…LRGYYNQSED (90 aa). At 25–308 the chain is on the extracellular side; the sequence is GSHSMRYFYT…EPSSQPTIPI (284 aa). A glycan (N-linked (GlcNAc...) asparagine) is linked at Asn-110. Positions 115-206 are alpha-2; sequence GSHTIQIMYG…ENGKETLQRT (92 aa). 2 disulfide bridges follow: Cys-125–Cys-188 and Cys-227–Cys-283. The segment at 207–298 is alpha-3; it reads DPPKTHMTHH…GLPKPLTLRW (92 aa). Residues 209 to 295 form the Ig-like C1-type domain; it reads PKTHMTHHPI…QHEGLPKPLT (87 aa). The tract at residues 299 to 308 is connecting peptide; it reads EPSSQPTIPI. Residues 309–332 traverse the membrane as a helical segment; sequence VGIIAGLVLLGAVITGAVVAAVMW. Residues 333–365 are Cytoplasmic-facing; sequence RRKSSDRKGGSYTQAASSDSAQGSDVSLTACKV. The segment at 339 to 360 is disordered; sequence RKGGSYTQAASSDSAQGSDVSL. Phosphoserine is present on Ser-343. Tyr-344 is subject to Phosphotyrosine. Over residues 346 to 359 the composition is skewed to low complexity; the sequence is QAASSDSAQGSDVS. Ser-349, Ser-350, Ser-352, Ser-356, and Ser-359 each carry phosphoserine.

Belongs to the MHC class I family. Heterodimer of an alpha chain and a beta chain (beta-2-microglobulin).

The protein resides in the membrane. Involved in the presentation of foreign antigens to the immune system. In Pan troglodytes (Chimpanzee), this protein is Patr class I histocompatibility antigen, A-108 alpha chain (Patr-A).